A 617-amino-acid chain; its full sequence is Regulatory solute carrier protein family 1 member 1 (617 aa).

A compositionally biased stretch (polar residues) spans methionine 1 to aspartate 22. Disordered stretches follow at residues methionine 1 to valine 106, glutamate 155 to glutamine 181, and lysine 217 to serine 237. Basic and acidic residues-rich tracts occupy residues serine 43–alanine 52 and serine 66–serine 83. 2 stretches are compositionally biased toward polar residues: residues threonine 89–glutamate 103 and glutamate 155–proline 165. Residues glutamine 410–proline 412 are involved in post-transcriptional down-regulation of SLC5A1. The 41-residue stretch at isoleucine 571–lysine 611 folds into the UBA domain.

Interacts with YRDC. In terms of tissue distribution, expressed in small intestine, kidney and brain.

The protein resides in the cell membrane. It is found in the nucleus. It localises to the golgi apparatus. Its subcellular location is the trans-Golgi network. Functionally, mediates transcriptional and post-transcriptional regulation of SLC5A1. Inhibits a dynamin and PKC-dependent exocytotic pathway of SLC5A1. Also involved in transcriptional regulation of SLC22A2. Exhibits glucose-dependent, short-term inhibition of SLC5A1 and SLC22A2 by inhibiting the release of vesicles from the trans-Golgi network. This chain is Regulatory solute carrier protein family 1 member 1 (RSC1A1), found in Homo sapiens (Human).